Consider the following 523-residue polypeptide: Acetyl-CoA hydrolase (523 aa).

277–281 (GIGNI) provides a ligand contact to CoA. Catalysis depends on Glu-302, which acts as the 5-glutamyl coenzyme A thioester intermediate. 2 residues coordinate CoA: Asn-392 and Gly-396.

This sequence belongs to the acetyl-CoA hydrolase/transferase family.

It is found in the cytoplasm. It carries out the reaction acetyl-CoA + H2O = acetate + CoA + H(+). Functionally, presumably involved in regulating the intracellular acetyl-CoA pool for fatty acid and cholesterol synthesis and fatty acid oxidation. The protein is Acetyl-CoA hydrolase (ACH1) of Eremothecium gossypii (strain ATCC 10895 / CBS 109.51 / FGSC 9923 / NRRL Y-1056) (Yeast).